Consider the following 198-residue polypeptide: Mediator of RNA polymerase II transcription subunit 20 (198 aa).

This sequence belongs to the Mediator complex subunit 20 family. Component of the Mediator complex.

Its subcellular location is the nucleus. In terms of biological role, component of the Mediator complex, a coactivator involved in the regulated transcription of nearly all RNA polymerase II-dependent genes. Mediator functions as a bridge to convey information from gene-specific regulatory proteins to the basal RNA polymerase II transcription machinery. Mediator is recruited to promoters by direct interactions with regulatory proteins and serves as a scaffold for the assembly of a functional preinitiation complex with RNA polymerase II and the general transcription factors. The chain is Mediator of RNA polymerase II transcription subunit 20 (mdt-20) from Caenorhabditis briggsae.